A 312-amino-acid chain; its full sequence is RNA pseudouridylate synthase domain-containing protein 1 (312 aa).

An N-acetylmethionine modification is found at methionine 1. Residue aspartate 67 is part of the active site. The tract at residues 256 to 298 is disordered; it reads ATPDPDPEDRGPRPGSPSALLPGPGRPPPPPTKPPETEAQRGP. Pro residues predominate over residues 279 to 289; sequence PGRPPPPPTKP.

It belongs to the pseudouridine synthase RluA family.

The polypeptide is RNA pseudouridylate synthase domain-containing protein 1 (RPUSD1) (Homo sapiens (Human)).